Here is a 354-residue protein sequence, read N- to C-terminus: 4-hydroxy-2-oxovalerate aldolase 6 (354 aa).

The Pyruvate carboxyltransferase domain maps to 10 to 262 (VRIVDTTLRD…ATGLDVMATL (253 aa)). 18–19 (RD) serves as a coordination point for substrate. Residue Asp-19 coordinates Mn(2+). The active-site Proton acceptor is His-22. Residues Ser-172 and His-201 each contribute to the substrate site. Residues His-201 and His-203 each contribute to the Mn(2+) site. Residue Tyr-292 coordinates substrate.

Belongs to the 4-hydroxy-2-oxovalerate aldolase family.

The enzyme catalyses (S)-4-hydroxy-2-oxopentanoate = acetaldehyde + pyruvate. This is 4-hydroxy-2-oxovalerate aldolase 6 from Rhodococcus jostii (strain RHA1).